Consider the following 122-residue polypeptide: MARIAGVNIPTNKRVIIALQYIHGIGPKFAQEITKKVGIPIGRRVHELSDAEVLQIREAIDQGYQVEGDLRREVAMNVKRLMDLGCYRGLRHRRSLPVRGQRTHTNARTRKGPAKAIAGKKK.

The segment at 97-122 is disordered; it reads PVRGQRTHTNARTRKGPAKAIAGKKK.

Belongs to the universal ribosomal protein uS13 family. In terms of assembly, part of the 30S ribosomal subunit. Forms a loose heterodimer with protein S19. Forms two bridges to the 50S subunit in the 70S ribosome.

Functionally, located at the top of the head of the 30S subunit, it contacts several helices of the 16S rRNA. In the 70S ribosome it contacts the 23S rRNA (bridge B1a) and protein L5 of the 50S subunit (bridge B1b), connecting the 2 subunits; these bridges are implicated in subunit movement. Contacts the tRNAs in the A and P-sites. This Bartonella henselae (strain ATCC 49882 / DSM 28221 / CCUG 30454 / Houston 1) (Rochalimaea henselae) protein is Small ribosomal subunit protein uS13.